Consider the following 907-residue polypeptide: Protein translocase subunit SecA (907 aa).

Residues Gln-87, 105-109 (GEGKT), and Asp-513 contribute to the ATP site. Residues 841–853 (EAQRRAQAEEAAR) show a composition bias toward basic and acidic residues. Residues 841–907 (EAQRRAQAEE…KYKQCHGQIN (67 aa)) form a disordered region. The span at 854-865 (RAQAQHASAQSQ) shows a compositional bias: low complexity. Residues 872-887 (EGHHQPVVRDERKVGR) are compositionally biased toward basic and acidic residues. Cys-891, Cys-893, Cys-902, and His-903 together coordinate Zn(2+).

Belongs to the SecA family. In terms of assembly, monomer and homodimer. Part of the essential Sec protein translocation apparatus which comprises SecA, SecYEG and auxiliary proteins SecDF-YajC and YidC. Requires Zn(2+) as cofactor.

The protein resides in the cell inner membrane. Its subcellular location is the cytoplasm. It catalyses the reaction ATP + H2O + cellular proteinSide 1 = ADP + phosphate + cellular proteinSide 2.. In terms of biological role, part of the Sec protein translocase complex. Interacts with the SecYEG preprotein conducting channel. Has a central role in coupling the hydrolysis of ATP to the transfer of proteins into and across the cell membrane, serving both as a receptor for the preprotein-SecB complex and as an ATP-driven molecular motor driving the stepwise translocation of polypeptide chains across the membrane. The protein is Protein translocase subunit SecA of Vibrio vulnificus (strain YJ016).